The following is a 580-amino-acid chain: Bifunctional lycopene cyclase/phytoene synthase (580 aa).

The next 3 helical transmembrane spans lie at 3–23 (WEYAQVHLKYTIPFGVVLAAV), 35–55 (KLVFLITVAVVSTIPWDSYLI), and 65–85 (GVVVGLTAWDIPAEELFFFVI). The N-linked (GlcNAc...) asparagine glycan is linked to Asn-89. The next 4 helical transmembrane spans lie at 116–136 (IAGQILFASAIIFGLVSVSSG), 139–159 (GMYMGLILIWACPFLLFLWSI), 171–191 (NTALPIALPTLYLWVVDTFAL), and 214–234 (IEEAVFFLLTNTLIVFGLIAC).

This sequence in the N-terminal section; belongs to the lycopene beta-cyclase family. It in the C-terminal section; belongs to the phytoene/squalene synthase family.

Its subcellular location is the membrane. It carries out the reaction all-trans-lycopene = gamma-carotene. The catalysed reaction is gamma-carotene = all-trans-beta-carotene. It catalyses the reaction 2 (2E,6E,10E)-geranylgeranyl diphosphate = 15-cis-phytoene + 2 diphosphate. Its pathway is carotenoid biosynthesis; beta-carotene biosynthesis. It participates in carotenoid biosynthesis; phytoene biosynthesis; all-trans-phytoene from geranylgeranyl diphosphate: step 1/1. Bifunctional enzyme; part of the car gene cluster that mediates the biosynthesis of neurosporaxanthin, a carboxylic apocarotenoid acting as an essential protective pigments and leading to orange pigmentation. CarAR catalyzes the first step of the pathway by converting geranylgeranyl diphosphate to phytoene, as well as the later cyclization step that transforms the carB product lycopene into gamma-carotene. CarAR also converts part of gamma-carotene into beta-carotene. Neurosporaxanthin is synthesized from geranyl-geranyl pyrophosphate (GGPP) through several enzymatic activities. Phytoene synthase activity performed by the bifunctional enzyme carAR first produces phytoene from geranyl-geranyl pyrophosphate (GGPP). The phytoene dehydrogenase carB then introduces 4 desaturations to lead to lycopene which is substrate of the carotene cyclase activity of carAR that leads to the production of gamma-carotene. CarB then performs a 5th desaturation reaction to yield torulene. Torulene is the substrate of the dioxidase carT that breaks the molecule, removing five carbon atoms to yield beta-apo-4'-carotenal, whereas the aldehyde dehydrogenase carD mediates the last step by converting beta-apo-4'-carotenal into neurosporaxanthin. The sequence is that of Bifunctional lycopene cyclase/phytoene synthase from Gibberella fujikuroi (strain CBS 195.34 / IMI 58289 / NRRL A-6831) (Bakanae and foot rot disease fungus).